A 407-amino-acid polypeptide reads, in one-letter code: Serine/threonine transporter SstT (407 aa).

9 helical membrane passes run 14-34, 48-68, 82-102, 141-161, 192-212, 218-238, 290-310, 316-336, and 363-383; these read GSLV…ATVS, FVGA…AASI, IVIL…LMSF, AVIT…GLAL, IGIF…AIAG, LVLL…IVFF, IPLG…ILTL, MGIQ…GVSA, and VAMQ…SAET.

This sequence belongs to the dicarboxylate/amino acid:cation symporter (DAACS) (TC 2.A.23) family.

Its subcellular location is the cell inner membrane. The enzyme catalyses L-serine(in) + Na(+)(in) = L-serine(out) + Na(+)(out). It carries out the reaction L-threonine(in) + Na(+)(in) = L-threonine(out) + Na(+)(out). In terms of biological role, involved in the import of serine and threonine into the cell, with the concomitant import of sodium (symport system). This Shewanella pealeana (strain ATCC 700345 / ANG-SQ1) protein is Serine/threonine transporter SstT.